We begin with the raw amino-acid sequence, 143 residues long: MGKCRGLRTARKLRSHRRDHKWHDKQYKKAHLGTALKANPFGGASHAKGIVLEKVGVEAKQPNSAIRKCVRVQLIKNGKKITAFVPNDGCLNFIEENDEVLVAGFGRKGHAVGDIPGVRFKVVKVANVSLLALYKGKKERPRS.

The span at 1 to 20 shows a compositional bias: basic residues; the sequence is MGKCRGLRTARKLRSHRRDH. The tract at residues 1–26 is disordered; that stretch reads MGKCRGLRTARKLRSHRRDHKWHDKQ. K37 participates in a covalent cross-link: Glycyl lysine isopeptide (Lys-Gly) (interchain with G-Cter in SUMO2). Residue K54 is modified to N6-succinyllysine. The residue at position 62 (P62) is a 3-hydroxyproline. K135 carries the N6-acetyllysine modification.

It belongs to the universal ribosomal protein uS12 family. As to quaternary structure, component of the 40S small ribosomal subunit. Part of the small subunit (SSU) processome, composed of more than 70 proteins and the RNA chaperone small nucleolar RNA (snoRNA) U3. In terms of assembly, (Microbial infection) Interacts with the African swine fever virus (ASFV) ubiquitin-conjugating enzyme UBCv1; this interaction probably plays a role in the viral regulation of host protein synthesis. In terms of processing, hydroxylation at Pro-62 affects translation termination efficiency.

It is found in the cytoplasm. The protein resides in the cytosol. Its subcellular location is the rough endoplasmic reticulum. The protein localises to the nucleus. It localises to the nucleolus. Component of the ribosome, a large ribonucleoprotein complex responsible for the synthesis of proteins in the cell. The small ribosomal subunit (SSU) binds messenger RNAs (mRNAs) and translates the encoded message by selecting cognate aminoacyl-transfer RNA (tRNA) molecules. The large subunit (LSU) contains the ribosomal catalytic site termed the peptidyl transferase center (PTC), which catalyzes the formation of peptide bonds, thereby polymerizing the amino acids delivered by tRNAs into a polypeptide chain. The nascent polypeptides leave the ribosome through a tunnel in the LSU and interact with protein factors that function in enzymatic processing, targeting, and the membrane insertion of nascent chains at the exit of the ribosomal tunnel. Plays an important role in translational accuracy. Part of the small subunit (SSU) processome, first precursor of the small eukaryotic ribosomal subunit. During the assembly of the SSU processome in the nucleolus, many ribosome biogenesis factors, an RNA chaperone and ribosomal proteins associate with the nascent pre-rRNA and work in concert to generate RNA folding, modifications, rearrangements and cleavage as well as targeted degradation of pre-ribosomal RNA by the RNA exosome. The chain is Small ribosomal subunit protein uS12 (RPS23) from Sus scrofa (Pig).